The sequence spans 458 residues: Cobyrinate a,c-diamide synthase (458 aa).

A GATase cobBQ-type domain is found at 254–445 (KIGVIRDQVF…IHVHFLSDKS (192 aa)). Cysteine 335 (nucleophile) is an active-site residue.

It belongs to the CobB/CbiA family. The cofactor is Mg(2+).

The catalysed reaction is cob(II)yrinate + 2 L-glutamine + 2 ATP + 2 H2O = cob(II)yrinate a,c diamide + 2 L-glutamate + 2 ADP + 2 phosphate + 2 H(+). It functions in the pathway cofactor biosynthesis; adenosylcobalamin biosynthesis; cob(II)yrinate a,c-diamide from sirohydrochlorin (anaerobic route): step 10/10. In terms of biological role, catalyzes the ATP-dependent amidation of the two carboxylate groups at positions a and c of cobyrinate, using either L-glutamine or ammonia as the nitrogen source. This Archaeoglobus fulgidus (strain ATCC 49558 / DSM 4304 / JCM 9628 / NBRC 100126 / VC-16) protein is Cobyrinate a,c-diamide synthase.